The chain runs to 339 residues: Uroporphyrinogen decarboxylase (339 aa).

Substrate contacts are provided by residues 21 to 25, aspartate 71, tyrosine 147, serine 202, and histidine 315; that span reads RQAGR.

The protein belongs to the uroporphyrinogen decarboxylase family. In terms of assembly, homodimer.

The protein resides in the cytoplasm. It carries out the reaction uroporphyrinogen III + 4 H(+) = coproporphyrinogen III + 4 CO2. Its pathway is porphyrin-containing compound metabolism; protoporphyrin-IX biosynthesis; coproporphyrinogen-III from 5-aminolevulinate: step 4/4. In terms of biological role, catalyzes the decarboxylation of four acetate groups of uroporphyrinogen-III to yield coproporphyrinogen-III. The protein is Uroporphyrinogen decarboxylase of Helicobacter pylori (strain HPAG1).